Reading from the N-terminus, the 430-residue chain is Enolase (430 aa).

Glutamine 167 provides a ligand contact to (2R)-2-phosphoglycerate. The active-site Proton donor is the glutamate 209. Mg(2+) is bound by residues aspartate 246, glutamate 289, and aspartate 316. (2R)-2-phosphoglycerate is bound by residues lysine 341, arginine 370, serine 371, and lysine 392. Catalysis depends on lysine 341, which acts as the Proton acceptor.

Belongs to the enolase family. As to quaternary structure, component of the RNA degradosome, a multiprotein complex involved in RNA processing and mRNA degradation. Mg(2+) serves as cofactor.

It localises to the cytoplasm. The protein localises to the secreted. Its subcellular location is the cell surface. It catalyses the reaction (2R)-2-phosphoglycerate = phosphoenolpyruvate + H2O. The protein operates within carbohydrate degradation; glycolysis; pyruvate from D-glyceraldehyde 3-phosphate: step 4/5. Functionally, catalyzes the reversible conversion of 2-phosphoglycerate (2-PG) into phosphoenolpyruvate (PEP). It is essential for the degradation of carbohydrates via glycolysis. This is Enolase from Alteromonas mediterranea (strain DSM 17117 / CIP 110805 / LMG 28347 / Deep ecotype).